The following is an 814-amino-acid chain: MCSLSTLSPNFSNAYGSKSVSSTASRFPCWQRSNETWKTQSREVIHWTYVVRCKEVLNEARQGHMNLPHVTLQNDLCEREALKEDMPLLNEYKMEECIRYIKNMLGSMDDGRITVSPYDTAWIALIRDIEGRDIPQFPSSLEWIANNQLSDGSWGDEQFFLAYDRLLNTLACVVALTYWKVHADKSEKGILFIKENISKLGDANVEQMTCGFEVVFPALLTKAKDLGIHGIPYDAPVMQEIFATKDRKMERVPKELLHKVPTCLLHNLEGLGNVDALGKLDWPKLLKLQTPKGSYITSPAASAFAVMETKDKDCLAFINYVVNKFNGGAPTVYPVDIYARLWAVDRLQRLGISRFFEPEIKNCLDYVYRFWTEKGVFSARESEFCDIDDTSMSIRLLRLHGYDIKPNALKHFKKDNMFTCYVGQGFESPSPIFNLYRASQVLFPGETILEEARDFSYNFLRERLEKNDLLDKWLISKHLPDEIKCGLEMPWYASLPRVEARFYIENYGVDDIWIGKSLYRMPEINDPVYLELAKLDYKRCQTQHQLEWRHIQQWYEDSSLEEFGISKKDLLLAYFLAAASIFEPGRSGQRLAWVKSQIMSHILTTYFSIKEASSSEQRKSSTKLENEQGRGQSRKTTIQRFITIFFGSLQEIMRDANEQIGKDISNLLFDIWRVWLEKLGEGNEEIQEVELLVSTINICGGHIASKDILSHSEYKTLSRLTNKICHQLRQLDMGNEELIAIEWRKNKTTDSIYREIEKDMQLLVQLVLQDSSNGISKDIKQTFLLAAKTFYYRAYFPTEQIGNHISKVLFEPVV.

The N-terminal 52 residues, Met-1–Arg-52, are a transit peptide targeting the chloroplast. Lys-248 is a binding site for substrate. The Mg(2+) site is built by Asp-386 and Asp-388. Residues Asp-386 to Asp-389 carry the DXDD motif motif. Lys-472 provides a ligand contact to substrate.

It belongs to the terpene synthase family. Mg(2+) is required as a cofactor. In terms of tissue distribution, mostly expressed in trichomes of leaves and fruits.

Its subcellular location is the plastid. The protein localises to the chloroplast. It catalyses the reaction (2E,6E,10E)-geranylgeranyl diphosphate = 9alpha-copalyl diphosphate. It participates in secondary metabolite biosynthesis; terpenoid biosynthesis. In terms of biological role, involved in the biosynthesis of labdane-type diterpenoid including cleroda-dienols, and peregrinol lactones and furan derivatives, dopaminergic diterpenoids that can bind to dopamine receptors in the human pituitary gland, have probably ability to lower prolactin levels, and are used to treat menstrual cycle disorders (e.g. premenstrual syndrome and mastodynia). Terpene synthase that produces syn-copalyl diphosophate from geranylgeranyl diphosphate (GGPP). This is Syn-copalyl diphosphate synthase TPS3, chloroplastic from Vitex agnus-castus (Chaste tree).